The primary structure comprises 366 residues: Chorismate synthase (366 aa).

An NADP(+)-binding site is contributed by arginine 48. FMN-binding positions include 125–127, glycine 283, 298–302, and arginine 324; these read RSS and KPTPS.

The protein belongs to the chorismate synthase family. Homotetramer. The cofactor is FMNH2.

The catalysed reaction is 5-O-(1-carboxyvinyl)-3-phosphoshikimate = chorismate + phosphate. The protein operates within metabolic intermediate biosynthesis; chorismate biosynthesis; chorismate from D-erythrose 4-phosphate and phosphoenolpyruvate: step 7/7. In terms of biological role, catalyzes the anti-1,4-elimination of the C-3 phosphate and the C-6 proR hydrogen from 5-enolpyruvylshikimate-3-phosphate (EPSP) to yield chorismate, which is the branch point compound that serves as the starting substrate for the three terminal pathways of aromatic amino acid biosynthesis. This reaction introduces a second double bond into the aromatic ring system. The protein is Chorismate synthase of Lachnospira eligens (strain ATCC 27750 / DSM 3376 / VPI C15-48 / C15-B4) (Eubacterium eligens).